The primary structure comprises 1265 residues: Shugoshin 2 (1265 aa).

Residues 69-116 (KENSRRITTEKMLLQKEVEKLNFENTFLRLKLNNLNKKLIDIEALMNN) are a coiled coil. Disordered regions lie at residues 161–202 (LTSN…STQD), 230–287 (DVPP…NLSA), 305–339 (LNCN…SARE), and 381–447 (GIKK…GAED). Residues 190-202 (SSGSTTQPLSTQD) show a composition bias toward polar residues. The span at 232 to 242 (PPRESHSHSDQ) shows a compositional bias: basic and acidic residues. Positions 305 to 322 (LNCNNEINGHTNETNTEM) are enriched in polar residues. Composition is skewed to basic and acidic residues over residues 389 to 410 (KTNE…EKKR) and 425 to 446 (IGEK…RGAE). A coiled-coil region spans residues 452–476 (FNNEQLAQMNEQLAQVNELKKMTLQ). A disordered region spans residues 499-526 (EQEETYSLSQSSGKFHQESKFDKGQNSL). Positions 503–512 (TYSLSQSSGK) are enriched in polar residues. A coiled-coil region spans residues 603–626 (EQNESNINKLRKKVNRKTEIISGM). Basic residues predominate over residues 1073–1083 (NKMTSKSKKRK). Residues 1073-1093 (NKMTSKSKKRKTSIDPSPESH) form a disordered region. Residue S1144 is modified to Phosphoserine. Residues 1200-1265 (KVNRRTQKSG…EPSLRDKMRR (66 aa)) are disordered. The span at 1217 to 1230 (DLSNTSFVSNNTAE) shows a compositional bias: polar residues. Basic and acidic residues predominate over residues 1231–1243 (SENKSEDLSSERT).

This sequence belongs to the shugoshin family. In terms of assembly, part of an astrin (SPAG5) -kinastrin (SKAP) complex containing KNSTRN, SPAG5, PLK1, DYNLL1 and SGO2. Interacts with CDCA8. Directly interacts with PPP2CA.

It is found in the nucleus. It localises to the chromosome. The protein localises to the centromere. The protein resides in the kinetochore. Functionally, cooperates with PPP2CA to protect centromeric cohesin from separase-mediated cleavage in oocytes specifically during meiosis I. Has a crucial role in protecting REC8 at centromeres from cleavage by separase. During meiosis, protects centromeric cohesion complexes until metaphase II/anaphase II transition, preventing premature release of meiosis-specific REC8 cohesin complexes from anaphase I centromeres. Is thus essential for an accurate gametogenesis. May act by targeting PPP2CA to centromeres, thus leading to cohesin dephosphorylation. Essential for recruiting KIF2C to the inner centromere and for correcting defective kinetochore attachments. Involved in centromeric enrichment of AUKRB in prometaphase. In Homo sapiens (Human), this protein is Shugoshin 2.